Consider the following 151-residue polypeptide: MATIESRLVEMLTVPVEALGFELWGIEFVHAGRHSIVRVFIDSEKGIFIEDCAETSRQVSAVLDVEDPITTEYTLEVSSPGVDRPLFTAAQYQAYIGEDAKVQLTMPVAGSRNLKGVISKVEGQILTLNVDGKDLIIALDNIRKGNIIAKF.

It belongs to the RimP family.

The protein localises to the cytoplasm. Required for maturation of 30S ribosomal subunits. The sequence is that of Ribosome maturation factor RimP from Shewanella denitrificans (strain OS217 / ATCC BAA-1090 / DSM 15013).